Here is a 100-residue protein sequence, read N- to C-terminus: MILQHILILSSFLFCLGIFGLITSQNMVKILICLELIFNAVNLNLVIFCKFFDSSAIIGNLFGLFIIAIAAAEAAIALAILLAMYRNRRSIRIDRFNILK.

3 consecutive transmembrane segments (helical) span residues 2 to 22 (ILQHILILSSFLFCLGIFGLI), 28 to 48 (VKILICLELIFNAVNLNLVIF), and 61 to 81 (LFGLFIIAIAAAEAAIALAIL).

This sequence belongs to the complex I subunit 4L family. In terms of assembly, NDH is composed of at least 16 different subunits, 5 of which are encoded in the nucleus.

The protein localises to the plastid. The protein resides in the chloroplast thylakoid membrane. The catalysed reaction is a plastoquinone + NADH + (n+1) H(+)(in) = a plastoquinol + NAD(+) + n H(+)(out). The enzyme catalyses a plastoquinone + NADPH + (n+1) H(+)(in) = a plastoquinol + NADP(+) + n H(+)(out). Its function is as follows. NDH shuttles electrons from NAD(P)H:plastoquinone, via FMN and iron-sulfur (Fe-S) centers, to quinones in the photosynthetic chain and possibly in a chloroplast respiratory chain. The immediate electron acceptor for the enzyme in this species is believed to be plastoquinone. Couples the redox reaction to proton translocation, and thus conserves the redox energy in a proton gradient. The sequence is that of NAD(P)H-quinone oxidoreductase subunit 4L, chloroplastic from Chara vulgaris (Common stonewort).